We begin with the raw amino-acid sequence, 2430 residues long: MAPPAHKSILERSENVLMSPWKGKLIVQDRMLCDIALWSTYGAMIPTQLPQELDFKYVMKVSSLKKRLPEAAFRKQNYLEEKVCFQDLCFNLYEVELSNRQGENIDKLTECIKNKQLAIIKCLEDRGFFILLTSSALLSEPDFGGKQMGLHGLHLFRSPLSTGVKDLKVEDDISMKVIPILSTLNCALLETKKSLPEERIHPNTLVKRHFQELYKADRSPSLSVAPQDRMKDPTFLGKLPSGFDLIPPAEKCPSESLTQLNSYFSDPSAYILEVSTALDLLAEHPQSPCVSDGICDAGFSLVMTPDPEFLVSEAEVRKETETKKDSEEMLKAKKRVFPLSPASNLRVQPKRKASMPHMVQSKKVNLCRPFPKRTASRADNSSDSPTTLKLVKGQFPQKRKRGAEVLTAQFVQKTKLDRKNQEAPISKDVPVPTNAKRARKQEKSPVKTVPRAKPPVKKSPQKQRVNIVKGNENPRNRKQLQPVKGETASKLQSEISRGCQEDGISINSVQPENTTAAHNDLPENSIVNYDSQALNMLADLALSSATSSTPVSEARNLHCSSELPQNDVLLSKENSLRGTSDHEYHRGVKTQKGELLPNPSSDRKSNSGSDLTVSQDEESLVPCSQAPAKAQSALTEEMLESSDASQSSSVSVEHSYALLLTEHSKKHLQEREILSPLFPRNGTKSPEAATPVGKVMPFRHQPGLLLQQKPPDDPVVKPKDRPPSARVKKSSCSRIVLSCDDSVKITFKCETEYAFSLDSKYTNNPLEKTVVRALHGPWNTDLPDNVEEVKLLLHMWVALFYSNQNKIIRSSRKVVEHSNPAKYVSINSTLESCELREIEESLGLEKCSADSLLETNEISRAHAAEVSFRDPNCLLPFIKTPLTQGLELCVQNEQKKTFARECDPDTQEDQNFICSYNNEVTGEEAKQESLETSNLVLSGIGSTQTNGPSVPSEEEIVQPLDSTRVASYSGTVTQATFTRTYDGPGSQPVICQSSVYGTLENKVDILDAAVQTKTGTLQDLIQHGSPINNECHPSLERKDDNMGCAVINPEPITLTFEKNAHVPIQTEGVNTADERTTFKKELIKQVSPAASLRHPVSTSENARTQGLRDIPSLVVAGQKGTKYLCASSVGGETLDKAVCSLQKETPLPVSLPSDKTMVMEALSLAKSSSHLSPSEEVRCTQDFLSQTQSLLGLSSEGLLELTQVEVDSSSASTTLGRQCSLNCISSGCHTSGDSLELRKNHKNGPNTENMNLEAFDSVFIKQTSLSVSREVSLELSEEDSDIDLALTISPPTSPREEMPAGEIEQFEEAPFSNLELQDVAEEIGEPEEVALTESREVSSADNVSVYPSVSEEPVENKERKGDNLQPVTLILSKENCTLEIAEEINVTSDFPFDSVIEEVSPASSPEPPVPVKETRPYQAVTPCILKLHGTQCEKSNQISQCESEDLGITEKENVFVGPTHPVGQDNFTQVQQMQVSAEMPLILTDHPGRTGRPTLPGKVTEEIVSSEHDEGLSFSGKVQCYGRELNQPASAAKCTGDFSPSPEKLVKSGNPLQPVSIENRNLDLKHLVLESSEPPFGPRNVIENKSLSDTLVSTTAPSGIVNVSVKQQTSPKSSQNHLFPGDLKTDEGIYLQVKSLTAASVDGAYSTQGCMCSVVPTLCSSSDNATLTHYVRPINAEPVFQAQEIPAGRMASLLKNGEPEAELHKETTGPGTAGPQSNTTSSLKGERKAIHTLQDVSTCETKELLNVGVSSLCAGPYQNTADTKENLSKEPLASFVSESFDTSVCGIATEHVEIENSGEGLRAEAGSETLGRDGEVGVNSDMHYELSGDSDLDLLGDCRNPRLDLEDSYTLRGSYTRKKDVPTDGYESSLNFHNNNQEDWGCSSWVPGMETSLPPGHWTAAVKKEEKCVPPYVQIRDLHGILRTYANFSITKELKDTMRTSHGLRRHPSFSANCGLPSSWTSTWQVADDLTQNTLDLEYLRFAHKLKQTIKNGDSQHSASSANVFPKESPTQISIGAFPSTKISEAPFLHPAPRSRSPLLVTVVESDPRPQGQPRRGYTASSLDSSSSWRERCSHNRDLRNSQRNHTVSFHLNKLKYNSTVKESRNDISLILNEYAEFNKVMKNSNQFIFQDKELNDVSGEATAQEMYLPFPGRSASYEDIIIDVCTNLHVKLRSVVKEACKSTFLFYLVETEDKSFFVRTKNLLRKGGHTEIEPQHFCQAFHRENDTLIIIIRNEDISSHLHQIPSLLKLKHFPSVIFAGVDSPGDVLDHTYQELFRAGGFVISDDKILEAVTLVQLKEIIKILEKLNGNGRWKWLLHYRENKKLKEDERVDSTAHKKNIMLKSFQSANIIELLHYHQCDSRSSTKAEILKCLLNLQIQHIDARFAVLLTDKPTIPREVFENSGILVTDVNNFIENIEKIAAPFRSSYW.

Phosphoserine is present on residues S19, S219, and S384. Disordered regions lie at residues 416–488 and 577–648; these read LDRK…GETA and RGTS…SQSS. S685 is subject to Phosphoserine. The disordered stretch occupies residues 704–727; the sequence is LLLQQKPPDDPVVKPKDRPPSARV. Positions 710 to 723 are enriched in basic and acidic residues; the sequence is PPDDPVVKPKDRPP. Phosphoserine occurs at positions 1025, 1087, and 1172. The disordered stretch occupies residues 1331 to 1360; the sequence is LTESREVSSADNVSVYPSVSEEPVENKERK. The residue at position 1541 (S1541) is a Phosphoserine. The interval 1700-1727 is disordered; sequence EAELHKETTGPGTAGPQSNTTSSLKGER. The span at 1714-1723 shows a compositional bias: polar residues; it reads GPQSNTTSSL. S1848 carries the post-translational modification Phosphoserine. K2007 participates in a covalent cross-link: Glycyl lysine isopeptide (Lys-Gly) (interchain with G-Cter in SUMO2). S2009, S2037, S2062, and S2066 each carry phosphoserine. The interval 2046–2069 is disordered; that stretch reads SDPRPQGQPRRGYTASSLDSSSSW.

It belongs to the TASOR family.

The sequence is that of Protein TASOR 2 from Homo sapiens (Human).